A 486-amino-acid chain; its full sequence is Glutamate--tRNA ligase (486 aa).

The short motif at proline 11 to asparagine 21 is the 'HIGH' region element. A 'KMSKS' region motif is present at residues lysine 255–arginine 259. ATP is bound at residue lysine 258.

This sequence belongs to the class-I aminoacyl-tRNA synthetase family. Glutamate--tRNA ligase type 1 subfamily. Monomer.

Its subcellular location is the cytoplasm. It carries out the reaction tRNA(Glu) + L-glutamate + ATP = L-glutamyl-tRNA(Glu) + AMP + diphosphate. Its function is as follows. Catalyzes the attachment of glutamate to tRNA(Glu) in a two-step reaction: glutamate is first activated by ATP to form Glu-AMP and then transferred to the acceptor end of tRNA(Glu). The chain is Glutamate--tRNA ligase from Streptococcus pneumoniae (strain Hungary19A-6).